A 33-amino-acid chain; its full sequence is Protamine TP14 (33 aa).

A disordered region spans residues 1-33 (MPRRRRSSRPPVRRRRRPRVSRRRRRRGGRRRR).

Testis.

The protein localises to the nucleus. It is found in the chromosome. In terms of biological role, protamines substitute for histones in the chromatin of sperm during the haploid phase of spermatogenesis. They compact sperm DNA into a highly condensed, stable and inactive complex. The protein is Protamine TP14 of Oncorhynchus mykiss (Rainbow trout).